Reading from the N-terminus, the 1450-residue chain is DNA-directed RNA polymerase RPB1 homolog (1450 aa).

This sequence belongs to the RNA polymerase beta' chain family. As to quaternary structure, part of the viral DNA-directed RNA polymerase that consists of 8 polII-like subunits (RPB1, RPB2, RPB3, RPB5, RPB6, RPB7, RPB9, RPB10), a capping enzyme and a termination factor.

It is found in the virion. It carries out the reaction RNA(n) + a ribonucleoside 5'-triphosphate = RNA(n+1) + diphosphate. Functionally, catalytic component of the DNA-directed RNA polymerase (RNAP) that catalyzes the transcription in the cytoplasm of viral DNA into RNA using the four ribonucleoside triphosphates as substrates. Forms the polymerase active center together with RPB2. Part of the core element with the central large cleft, the clamp element that moves to open and close the cleft and the jaws that are thought to grab the incoming DNA template. This African swine fever virus (isolate Warthog/Namibia/Wart80/1980) (ASFV) protein is DNA-directed RNA polymerase RPB1 homolog.